We begin with the raw amino-acid sequence, 549 residues long: Cation/acetate symporter ActP (549 aa).

At 1–32 (MKRVLTALAATLPFAANAADAISGAVERQPTN) the chain is on the periplasmic side. Residues 33-55 (WQAIIMFLIFVVFTLGITYWASK) form a helical membrane-spanning segment. The Cytoplasmic segment spans residues 56-75 (RVRSRSDYYTAGGNITGFQN). A helical transmembrane segment spans residues 76–98 (GLAIAGDYMSAASFLGISALVFT). The Periplasmic portion of the chain corresponds to 99-102 (SGYD). A helical membrane pass occupies residues 103–125 (GLIYSLGFLVGWPIILFLIAERL). The Cytoplasmic segment spans residues 126–145 (RNLGRYTSADVASYRLKQGP). The chain crosses the membrane as a helical span at residues 146-168 (IRILSACGSLVVVALYLIAQMVG). Residues 169–182 (AGKLIELLFGLNYH) are Periplasmic-facing. A helical membrane pass occupies residues 183 to 205 (IAVVLVGVLMMMYVLFGGMLATT). Residues 206–211 (WVQIIK) lie on the Cytoplasmic side of the membrane. The chain crosses the membrane as a helical span at residues 212-234 (AVLLLFGASFMAFMVMKHVGFSF). Residues 235-260 (NNLFSEAMAVHPKGVDIMKPGGLVKD) lie on the Periplasmic side of the membrane. The chain crosses the membrane as a helical span at residues 261–283 (PISALSLGLGLMFGTAGLPHILM). The Cytoplasmic portion of the chain corresponds to 284–302 (RFFTVSDAREARKSVFYAT). A helical membrane pass occupies residues 303-325 (GFMGYFYILTFIIGFGAIMLVGA). The Periplasmic segment spans residues 326 to 349 (NPEYKDAAGHLIGGNNMAAVHLAN). A helical transmembrane segment spans residues 350-372 (AVGGNLFLGFISAVAFATILAVV). The Cytoplasmic portion of the chain corresponds to 373–401 (ADLTLAGASAVSHDLYANVFKKGATEREE). Residues 402–424 (LRVSKITVLILGVIAIILGVLFE) traverse the membrane as a helical segment. Residues 425–427 (NQN) lie on the Periplasmic side of the membrane. Residues 428 to 450 (IAFMVGLAFAIAASCNFPIILLS) form a helical membrane-spanning segment. Residues 451–461 (MYWSKLTTRGA) lie on the Cytoplasmic side of the membrane. Residues 462-484 (MLGGWLGLITAVVLMILGPTIWV) traverse the membrane as a helical segment. Residues 485-493 (QILGHEKAI) are Periplasmic-facing. Residues 494–516 (FPYEYPALFSISVAFLGIWFFSA) traverse the membrane as a helical segment. Topologically, residues 517–549 (TDNSAEGARERELFRAQFIRSQTGFGVEQGRAH) are cytoplasmic.

This sequence belongs to the sodium:solute symporter (SSF) (TC 2.A.21) family.

It is found in the cell inner membrane. Its function is as follows. Transports acetate. This chain is Cation/acetate symporter ActP (actP), found in Shigella flexneri.